A 128-amino-acid chain; its full sequence is Large ribosomal subunit protein bL12 (128 aa).

This sequence belongs to the bacterial ribosomal protein bL12 family. In terms of assembly, homodimer. Part of the ribosomal stalk of the 50S ribosomal subunit. Forms a multimeric L10(L12)X complex, where L10 forms an elongated spine to which 2 to 4 L12 dimers bind in a sequential fashion. Binds GTP-bound translation factors.

Functionally, forms part of the ribosomal stalk which helps the ribosome interact with GTP-bound translation factors. Is thus essential for accurate translation. This Brachyspira hyodysenteriae (strain ATCC 49526 / WA1) protein is Large ribosomal subunit protein bL12.